We begin with the raw amino-acid sequence, 308 residues long: Methionyl-tRNA formyltransferase (308 aa).

Position 110-113 (110-113 (SLLP)) interacts with (6S)-5,6,7,8-tetrahydrofolate.

It belongs to the Fmt family.

The catalysed reaction is L-methionyl-tRNA(fMet) + (6R)-10-formyltetrahydrofolate = N-formyl-L-methionyl-tRNA(fMet) + (6S)-5,6,7,8-tetrahydrofolate + H(+). In terms of biological role, attaches a formyl group to the free amino group of methionyl-tRNA(fMet). The formyl group appears to play a dual role in the initiator identity of N-formylmethionyl-tRNA by promoting its recognition by IF2 and preventing the misappropriation of this tRNA by the elongation apparatus. The protein is Methionyl-tRNA formyltransferase of Neisseria meningitidis serogroup C (strain 053442).